We begin with the raw amino-acid sequence, 584 residues long: Transcription factor COE1 (584 aa).

Methionine 1 is modified (N-acetylmethionine). The span at 1 to 14 shows a compositional bias: polar residues; it reads MFGIQESIQRSGSS. Residues 1 to 21 form a disordered region; sequence MFGIQESIQRSGSSMKEEPLG. Residue lysine 16 forms a Glycyl lysine isopeptide (Lys-Gly) (interchain with G-Cter in SUMO1); alternate linkage. Residue lysine 16 forms a Glycyl lysine isopeptide (Lys-Gly) (interchain with G-Cter in SUMO2); alternate linkage. The segment at 63–66 is interaction with DNA; that stretch reads RKSN. The C5-type zinc-finger motif lies at 151-170; it reads CRVLLTHEIMCSRCCDKKSC. 2 interaction with DNA regions span residues 197–204 and 236–239; these read NCLKNAGN and NNSK. An IPT/TIG domain is found at 255–338; it reads PCIKAISPSE…KGTPGRFIYT (84 aa). Residues 450 to 473 form a disordered region; it reads GFTRNSSSVSPHGYVPSTTPQQTN.

It belongs to the COE family. Homodimer. Interacts with ZNF423 and ZNF521, leading to prevent EBF1 to bind DNA and activate target genes. Interacts with CCR4-NOT component CNOT3. Expressed exclusively in olfactory receptor neurons and their precursors.

Its subcellular location is the nucleus. Functionally, key pioneer transcription factor of B-cell specification and commitment. Recognizes variations of the palindromic sequence 5'-ATTCCCNNGGGAATT-3'. Operates in a transcription factor network to activate B-cell-specific genes and repress genes associated with alternative cell fates. For instance, positively regulates many B-cell specific genes including BCR or CD40 while repressing genes that direct cells into alternative lineages, including GATA3 and TCF7 for the T-cell lineage. In addition to its role during lymphopoiesis, controls the thermogenic gene program in adipocytes during development and in response to environmental cold. The sequence is that of Transcription factor COE1 (Ebf1) from Rattus norvegicus (Rat).